We begin with the raw amino-acid sequence, 276 residues long: Putative pyruvate, phosphate dikinase regulatory protein (276 aa).

ADP is bound at residue 153–160 (GISRTSKT).

It belongs to the pyruvate, phosphate/water dikinase regulatory protein family. PDRP subfamily.

It catalyses the reaction N(tele)-phospho-L-histidyl/L-threonyl-[pyruvate, phosphate dikinase] + ADP = N(tele)-phospho-L-histidyl/O-phospho-L-threonyl-[pyruvate, phosphate dikinase] + AMP + H(+). It carries out the reaction N(tele)-phospho-L-histidyl/O-phospho-L-threonyl-[pyruvate, phosphate dikinase] + phosphate + H(+) = N(tele)-phospho-L-histidyl/L-threonyl-[pyruvate, phosphate dikinase] + diphosphate. In terms of biological role, bifunctional serine/threonine kinase and phosphorylase involved in the regulation of the pyruvate, phosphate dikinase (PPDK) by catalyzing its phosphorylation/dephosphorylation. In Brucella anthropi (strain ATCC 49188 / DSM 6882 / CCUG 24695 / JCM 21032 / LMG 3331 / NBRC 15819 / NCTC 12168 / Alc 37) (Ochrobactrum anthropi), this protein is Putative pyruvate, phosphate dikinase regulatory protein.